Consider the following 393-residue polypeptide: tRNA(Met) cytidine acetate ligase (393 aa).

Gly81, Asn142, and Arg167 together coordinate ATP.

The protein belongs to the TmcAL family.

It localises to the cytoplasm. The enzyme catalyses cytidine(34) in elongator tRNA(Met) + acetate + ATP = N(4)-acetylcytidine(34) in elongator tRNA(Met) + AMP + diphosphate. In terms of biological role, catalyzes the formation of N(4)-acetylcytidine (ac(4)C) at the wobble position of elongator tRNA(Met), using acetate and ATP as substrates. First activates an acetate ion to form acetyladenylate (Ac-AMP) and then transfers the acetyl group to tRNA to form ac(4)C34. The protein is tRNA(Met) cytidine acetate ligase of Bacillus cereus (strain ATCC 10987 / NRS 248).